The primary structure comprises 368 residues: Hydrophobic dipeptide epimerase (368 aa).

Substrate is bound by residues Thr143 and Lys168–Lys170. Positions 197, 225, and 253 each coordinate Mg(2+). Substrate-binding positions include Lys277 and Asp329–Asp331.

Belongs to the mandelate racemase/muconate lactonizing enzyme family. Mg(2+) is required as a cofactor.

In terms of biological role, catalyzes the epimerization of various hydrophobic dipeptides, such as L-Ala-L-Phe. Has epimerase activity with L-Ala-L-Thr, L-Ala-L-Met, L-Ala-L-Tyr, as well as L-Phe-L-Met, L-Phe-L-Ser and L-Phe-L-Thr (in vitro). The chain is Hydrophobic dipeptide epimerase from Citrifermentans bemidjiense (strain ATCC BAA-1014 / DSM 16622 / JCM 12645 / Bem) (Geobacter bemidjiensis).